A 669-amino-acid chain; its full sequence is Pre-mRNA-processing factor 39 (669 aa).

Basic and acidic residues predominate over residues 1-10 (MQNSHMDEYR). Residues 1–23 (MQNSHMDEYRNSSNGSTGNSSEV) form a disordered region. The span at 11–23 (NSSNGSTGNSSEV) shows a compositional bias: low complexity. Phosphoserine is present on Ser44. 7 HAT repeats span residues 109–141 (NHLM…LEKR), 143–175 (DNIK…FLKE), 183–218 (ETNN…WENE), 220–253 (GNLR…HVQN), 333–365 (TFEE…FEIE), 367–399 (GTHE…YMEN), and 404–436 (GVRH…QQGN). Residues 599–624 (KEQDSLKRKAENGSEEPEEKKAHTED) show a composition bias toward basic and acidic residues. Residues 599–634 (KEQDSLKRKAENGSEEPEEKKAHTEDTTSSSTQMID) are disordered. The span at 625–634 (TTSSSTQMID) shows a compositional bias: polar residues.

The protein belongs to the PRP39 family.

The protein resides in the nucleus. Its function is as follows. Involved in pre-mRNA splicing. In Homo sapiens (Human), this protein is Pre-mRNA-processing factor 39 (PRPF39).